The chain runs to 390 residues: 1-deoxy-D-xylulose 5-phosphate reductoisomerase (390 aa).

Positions 10, 11, 12, 13, 36, 37, 38, and 121 each coordinate NADPH. K122 is a 1-deoxy-D-xylulose 5-phosphate binding site. NADPH is bound at residue E123. D147 contributes to the Mn(2+) binding site. S148, E149, S173, and H196 together coordinate 1-deoxy-D-xylulose 5-phosphate. E149 contributes to the Mn(2+) binding site. G202 is an NADPH binding site. S209, N214, K215, and E218 together coordinate 1-deoxy-D-xylulose 5-phosphate. E218 contacts Mn(2+). The interval 367–390 is disordered; the sequence is AASEHGRREAEKRVGARAHAPAGR. Basic and acidic residues predominate over residues 370–380; that stretch reads EHGRREAEKRV.

Belongs to the DXR family. Mg(2+) serves as cofactor. Requires Mn(2+) as cofactor.

The enzyme catalyses 2-C-methyl-D-erythritol 4-phosphate + NADP(+) = 1-deoxy-D-xylulose 5-phosphate + NADPH + H(+). It functions in the pathway isoprenoid biosynthesis; isopentenyl diphosphate biosynthesis via DXP pathway; isopentenyl diphosphate from 1-deoxy-D-xylulose 5-phosphate: step 1/6. Functionally, catalyzes the NADPH-dependent rearrangement and reduction of 1-deoxy-D-xylulose-5-phosphate (DXP) to 2-C-methyl-D-erythritol 4-phosphate (MEP). This chain is 1-deoxy-D-xylulose 5-phosphate reductoisomerase, found in Anaeromyxobacter sp. (strain K).